Reading from the N-terminus, the 812-residue chain is G patch domain-containing protein 1 homolog (812 aa).

Residues 1–42 (MNRKKLAAYGQEFEDDDEEGSSVSKKPTQIHEEIATDEKGKR) form a disordered region. Residues 29–40 (QIHEEIATDEKG) show a composition bias toward basic and acidic residues. A G-patch domain is found at 145-191 (SNSIGVRMLRSMGWREGRGIGLANVKQKQKRGGESSEAQFDREQASK). Disordered stretches follow at residues 384 to 416 (ANEV…FPDE) and 584 to 812 (NEIE…EEKK). Over residues 586–609 (IEMRERLLKSRAQRGAEEKKRNQS) the composition is skewed to basic and acidic residues. Composition is skewed to acidic residues over residues 610–630 (DDDD…ENEA) and 653–668 (DGAD…EEAE). The span at 669–720 (EKERQEILKKREEDLKRRREIVEKKEEENRKRVEKELKELENRDLLRVSKQQ) shows a compositional bias: basic and acidic residues. Positions 761 to 794 (MKKKKKDKKEKEKKKKSKKSKKSKKEKKTKRKHS) are enriched in basic residues. Residues 800 to 812 (DSGDNSDGWEEKK) are compositionally biased toward acidic residues.

This sequence belongs to the GPATCH1 family.

This Caenorhabditis elegans protein is G patch domain-containing protein 1 homolog.